A 258-amino-acid chain; its full sequence is UPF0246 protein LHK_02295 (258 aa).

The protein belongs to the UPF0246 family.

The polypeptide is UPF0246 protein LHK_02295 (Laribacter hongkongensis (strain HLHK9)).